Consider the following 326-residue polypeptide: Tetraacyldisaccharide 4'-kinase (326 aa).

58–65 (SVGGNGKT) provides a ligand contact to ATP.

The protein belongs to the LpxK family.

The catalysed reaction is a lipid A disaccharide + ATP = a lipid IVA + ADP + H(+). The protein operates within glycolipid biosynthesis; lipid IV(A) biosynthesis; lipid IV(A) from (3R)-3-hydroxytetradecanoyl-[acyl-carrier-protein] and UDP-N-acetyl-alpha-D-glucosamine: step 6/6. Transfers the gamma-phosphate of ATP to the 4'-position of a tetraacyldisaccharide 1-phosphate intermediate (termed DS-1-P) to form tetraacyldisaccharide 1,4'-bis-phosphate (lipid IVA). The sequence is that of Tetraacyldisaccharide 4'-kinase from Pseudoalteromonas translucida (strain TAC 125).